The sequence spans 341 residues: Tryptophan--tRNA ligase (341 aa).

ATP-binding positions include 11-13 and 19-20; these read RPT and GH. The short motif at 12-20 is the 'HIGH' region element; the sequence is PTGKLHIGH. Aspartate 140 is an L-tryptophan binding site. Residues 152–154, leucine 194, and 202–206 contribute to the ATP site; these read GTD and KMSKS. The 'KMSKS' region signature appears at 202–206; the sequence is KMSKS.

It belongs to the class-I aminoacyl-tRNA synthetase family. In terms of assembly, homodimer.

Its subcellular location is the cytoplasm. It catalyses the reaction tRNA(Trp) + L-tryptophan + ATP = L-tryptophyl-tRNA(Trp) + AMP + diphosphate + H(+). Its function is as follows. Catalyzes the attachment of tryptophan to tRNA(Trp). This Streptococcus pneumoniae serotype 4 (strain ATCC BAA-334 / TIGR4) protein is Tryptophan--tRNA ligase.